Consider the following 451-residue polypeptide: Tapasin-related protein (451 aa).

The first 20 residues, 1–20 (MGLEPSWYLLLCLAVSGAAG), serve as a signal peptide directing secretion. Residues 21-412 (TDPPTAPTTA…RVLPNPEQRG (392 aa)) lie on the Lumenal side of the membrane. One can recognise an Ig-like V-type domain in the interval 196-301 (FQVTSETQTL…TSLYQAQQIM (106 aa)). Disulfide bonds link Cys217/Cys288 and Cys326/Cys387. N-linked (GlcNAc...) asparagine glycosylation is found at Asn270 and Asn277. Residues 302–399 (PLNILAPPKI…AHVSLEEPLT (98 aa)) form the Ig-like C1-type domain. Residues 413–433 (TLGVIFASIIFLSALLLFLGL) traverse the membrane as a helical segment. Topologically, residues 434-451 (HRQQASSSRSTRPMRHSG) are cytoplasmic.

As to quaternary structure, interacts with peptide-free HLA-A*02-B2M complexes or those loaded with low affinity peptides, likely facilitating peptide exchange onto higher affinity peptides. Interacts with MR1 in a ligand-independent way; this interaction may stabilize MR1 pool and facilitate ligand loading and dissociation. As to expression, widely expressed.

It localises to the cell membrane. It is found in the endoplasmic reticulum membrane. The protein resides in the microsome membrane. Its subcellular location is the golgi apparatus membrane. Functionally, component of the antigen processing and presentation pathway, which binds to MHC class I coupled with beta2-microglobulin/B2M. Association between TAPBPR and MHC class I occurs in the absence of a functional peptide-loading complex (PLC). Expression seems to slow down and down-regulate MHC class I surface expression. This is Tapasin-related protein (Tapbpl) from Mus musculus (Mouse).